A 248-amino-acid chain; its full sequence is uncharacterized protein (248 aa).

This is an uncharacterized protein from Streptococcus pyogenes serotype M6 (strain ATCC BAA-946 / MGAS10394).